The following is a 191-amino-acid chain: Elongation factor P-like protein (191 aa).

This sequence belongs to the elongation factor P family.

This is Elongation factor P-like protein from Photobacterium profundum (strain SS9).